Reading from the N-terminus, the 329-residue chain is Putative helicase 109L (329 aa).

The region spanning 105-259 is the Helicase ATP-binding domain; sequence LTLLTQHKSC…LFDMFFGPEM (155 aa). 118-125 is a binding site for ATP; the sequence is CYTGFGKT. Positions 212-215 match the DEAH box motif; sequence DEAH.

Belongs to the DEAD box helicase family. DEAH subfamily.

The protein is Putative helicase 109L of Invertebrate iridescent virus 3 (IIV-3).